Here is a 718-residue protein sequence, read N- to C-terminus: Mitotic spindle assembly checkpoint protein MAD1 (718 aa).

The residue at position 1 (Met-1) is an N-acetylmethionine. At Ser-16 the chain carries Phosphoserine. Positions 46–632 form a coiled coil; sequence QQSMQLEERA…QTKIQEFRKA (587 aa). At Lys-61 the chain carries N6-acetyllysine; alternate. A Glycyl lysine isopeptide (Lys-Gly) (interchain with G-Cter in SUMO2); alternate cross-link involves residue Lys-61. The Nuclear localization signal motif lies at 79-82; it reads KRAR. Ser-214 is subject to Phosphoserine. Residues 301-340 are important for interaction with IK; the sequence is VGLELENERLLAKLQSWERLDQTMGLSIRTPEDLSRFVVE. The tract at residues 380-532 is necessary for interaction with NEK2; that stretch reads LLEERKKRET…EAQLERRALQ (153 aa). The residue at position 428 (Ser-428) is a Phosphoserine. An important for interaction with IK region spans residues 439 to 480; sequence EDMVQKVHSHSAEMEAQLSQALEELGGQKQRADMLEMELKML. The interval 540 to 551 is necessary for interaction with MAD2L1; the sequence is TKVLHMSLNPTS. Residues Ser-598 and Ser-610 each carry the phosphoserine modification. Tyr-634 carries the post-translational modification Phosphotyrosine. Thr-716 carries the phosphothreonine modification.

This sequence belongs to the MAD1 family. As to quaternary structure, homodimer. Dimerizes via its N- and C- terminal regions. Heterodimerizes with MAD2L1 in order to form a tetrameric MAD1L1-MAD2L1 core complex. Interacts with the closed conformation form of MAD2L1 (C-MAD2) and open conformation form of MAD2L1 (O-MAD2). It is unclear whether MAD1L1 dimerization promotes the conversion of closed to open conformation of MAD2L1. Formation of a heterotetrameric core complex containing two molecules each of MAD1L1 and of MAD2L1 promotes binding of another molecule of MAD2L1 to each MAD2L1, resulting in a heterohexamer. Perturbation of the original MAD1L1-MAD2L1 structure by the spindle checkpoint may decrease MAD2L1 affinity for MAD1L1. CDC20 can compete with MAD1L1 for MAD2L1 binding, until the attachment and/or tension dampen the checkpoint signal, preventing further release of MAD2L1 on to CDC20. Also able to interact with the BUB1/BUB3 complex. Interacts with NEK2. Interacts with TTK. Interacts with TPR; the interactions occurs in a microtubule-independent manner. Interacts with IK. Interacts with the viral Tax protein. Interacts with PRAP1. In terms of assembly, interacts with MAD2L1; this interaction leads to the cytoplasmic sequestration of MAD2L1. Interacts with PRAP1. In terms of processing, phosphorylated; by BUB1. Become hyperphosphorylated in late S through M phases or after mitotic spindle damage. Phosphorylated; by TTK. As to expression, expressed in hepatocellular carcinomas and hepatoma cell lines (at protein level).

The protein resides in the nucleus. The protein localises to the chromosome. Its subcellular location is the centromere. It is found in the kinetochore. It localises to the nucleus envelope. The protein resides in the cytoplasm. The protein localises to the cytoskeleton. Its subcellular location is the microtubule organizing center. It is found in the centrosome. It localises to the spindle. The protein resides in the spindle pole. Its function is as follows. Component of the spindle-assembly checkpoint that prevents the onset of anaphase until all chromosomes are properly aligned at the metaphase plate. Forms a heterotetrameric complex with the closed conformation form of MAD2L1 (C-MAD2) at unattached kinetochores during prometaphase, recruits an open conformation of MAD2L1 (O-MAD2) and promotes the conversion of O-MAD2 to C-MAD2, which ensures mitotic checkpoint signaling. Functionally, sequesters MAD2L1 in the cytoplasm preventing its function as an activator of the mitotic spindle assembly checkpoint (SAC) resulting in SAC impairment and chromosomal instability in hepatocellular carcinomas. This is Mitotic spindle assembly checkpoint protein MAD1 (MAD1L1) from Homo sapiens (Human).